Consider the following 668-residue polypeptide: Protein brown (668 aa).

Residues 1–412 lie on the Cytoplasmic side of the membrane; it reads MPMDEGDAQG…TEDLANIRSG (412 aa). The region spanning 31 to 328 is the ABC transporter domain; it reads YSFWNECRKQ…FTEGFMQPKN (298 aa). Residue 63–70 participates in ATP binding; sequence GGSGAGKT. The helical transmembrane segment at 413–433 threads the bilayer; that stretch reads LIGFGFFMTTAVTLSLMYSGV. Topologically, residues 434 to 453 are extracellular; sequence GGLTQRTVQDVGGSIFMLSN. Residues 454-474 traverse the membrane as a helical segment; it reads EMIFTFSYGVTYIFPAALPII. At 475–490 the chain is on the cytoplasmic side; it reads RREVAEGTYSLSAYYV. The chain crosses the membrane as a helical span at residues 491–511; the sequence is ALVLSFVPVAFFKGYMFLSVI. Over 512-524 the chain is Extracellular; the sequence is YASIYYTRGFLLY. A helical membrane pass occupies residues 525–545; that stretch reads ITMGFLMSLSAIAAVGYGVFL. The Cytoplasmic segment spans residues 546-561; the sequence is SSLFETDKMASECAAP. Residues 562–582 traverse the membrane as a helical segment; sequence FDLIFLIFGGTYMNVDSVPLL. Topologically, residues 583-637 are extracellular; it reads KYFSLFFYSNEALMYNFWIDIDNIACXVNDEHPCCQTGLEVLQQASFRTADYTFW. The helical transmembrane segment at 638 to 658 threads the bilayer; sequence LDCASLLVVALVFHIVSFTLI. At 659–668 the chain is on the cytoplasmic side; sequence RRYINRSGYY.

It belongs to the ABC transporter superfamily. ABCG family. Eye pigment precursor importer (TC 3.A.1.204) subfamily. May form a heterodimer with w/white. Expressed in eyes.

The protein resides in the membrane. It catalyses the reaction guanine(out) + ATP + H2O = guanine(in) + ADP + phosphate + H(+). The enzyme catalyses riboflavin(in) + ATP + H2O = riboflavin(out) + ADP + phosphate + H(+). It carries out the reaction (6S)-5,6,7,8-tetrahydrofolate(out) + ATP + H2O = (6S)-5,6,7,8-tetrahydrofolate(in) + ADP + phosphate + H(+). Functionally, ATP-dependent transporter of the ATP-binding cassette (ABC) family which transports various molecules including bioamines, neurotransmitters and metabolic intermediates. In the eye and probably in association with w/white, required for the transport of the eye red pigment precursor, guanine, into pigment cell granules. In Malpighian tubules, involved in guanine uptake. Probably in association with w/white, involved in aging-induced intestinal stem cell proliferation in the midgut by regulating tetrahydrofolate transport. The chain is Protein brown from Drosophila virilis (Fruit fly).